A 307-amino-acid polypeptide reads, in one-letter code: Mycothiol acetyltransferase (307 aa).

2 consecutive N-acetyltransferase domains span residues 12-157 (TRTD…PPLP) and 160-307 (VTLR…YQLG). A 1D-myo-inositol 2-(L-cysteinylamino)-2-deoxy-alpha-D-glucopyranoside-binding site is contributed by Glu43. 87–89 (LAV) provides a ligand contact to acetyl-CoA. Residues Glu187, Lys227, and Glu239 each coordinate 1D-myo-inositol 2-(L-cysteinylamino)-2-deoxy-alpha-D-glucopyranoside. Acetyl-CoA contacts are provided by residues 243-245 (LGV) and 250-256 (HGGGLGK). Tyr278 is a 1D-myo-inositol 2-(L-cysteinylamino)-2-deoxy-alpha-D-glucopyranoside binding site.

This sequence belongs to the acetyltransferase family. MshD subfamily. As to quaternary structure, monomer.

It carries out the reaction 1D-myo-inositol 2-(L-cysteinylamino)-2-deoxy-alpha-D-glucopyranoside + acetyl-CoA = mycothiol + CoA + H(+). Functionally, catalyzes the transfer of acetyl from acetyl-CoA to desacetylmycothiol (Cys-GlcN-Ins) to form mycothiol. This chain is Mycothiol acetyltransferase, found in Salinispora tropica (strain ATCC BAA-916 / DSM 44818 / JCM 13857 / NBRC 105044 / CNB-440).